The primary structure comprises 462 residues: Nitrogenase iron-iron protein beta chain (462 aa).

The [8Fe-7S] cluster site is built by C20, C45, C104, and S143.

This sequence belongs to the NifD/NifK/NifE/NifN family. As to quaternary structure, hexamer of two alpha, two beta, and two delta chains. The cofactor is [8Fe-7S] cluster.

The enzyme catalyses N2 + 8 reduced [2Fe-2S]-[ferredoxin] + 16 ATP + 16 H2O = H2 + 8 oxidized [2Fe-2S]-[ferredoxin] + 2 NH4(+) + 16 ADP + 16 phosphate + 6 H(+). Its function is as follows. This iron-iron protein is part of the nitrogenase complex that catalyzes the key enzymatic reactions in nitrogen fixation. Other nitrogenase complexes utilize a molybdenum-iron protein or a vanadium-iron protein. This chain is Nitrogenase iron-iron protein beta chain (anfK), found in Azotobacter vinelandii.